The following is a 115-amino-acid chain: OV39 antigen (115 aa).

The polypeptide is OV39 antigen (OV39) (Onchocerca volvulus).